The primary structure comprises 264 residues: Proliferating cell nuclear antigen (264 aa).

The DNA-binding element occupies 61–80 (RCDRNISMGMNLGNMAKMLK).

It belongs to the PCNA family.

The protein localises to the nucleus. Its function is as follows. This protein is an auxiliary protein of DNA polymerase delta and is involved in the control of eukaryotic DNA replication by increasing the polymerase's processibility during elongation of the leading strand. The sequence is that of Proliferating cell nuclear antigen from Daucus carota (Wild carrot).